The sequence spans 507 residues: Archaeal-type glutamate synthase [NADPH] (507 aa).

4Fe-4S ferredoxin-type domains are found at residues 10 to 39 (FVVE…YDEN) and 41 to 70 (NRVY…VRKN). [4Fe-4S] cluster-binding residues include C19, C22, C25, C29, C50, C53, C56, and C60.

The protein belongs to the glutamate synthase family. The cofactor is FMN.

It catalyses the reaction 2 L-glutamate + NADP(+) = L-glutamine + 2-oxoglutarate + NADPH + H(+). The polypeptide is Archaeal-type glutamate synthase [NADPH] (Thermotoga maritima (strain ATCC 43589 / DSM 3109 / JCM 10099 / NBRC 100826 / MSB8)).